A 117-amino-acid chain; its full sequence is Immunoglobulin heavy variable 3-74 (117 aa).

The signal sequence occupies residues 1–19; that stretch reads MEFGLSWVFLVAILKGVQC. Residues 20–44 form a framework-1 region; sequence EVQLVESGGGLVQPGGSLRLSCAAS. The Ig-like domain maps to 20–117; the sequence is EVQLVESGGG…EDTAVYYCAR (98 aa). The cysteines at positions 41 and 115 are disulfide-linked. A complementarity-determining-1 region spans residues 45 to 52; sequence GFTFSSYW. The interval 53–69 is framework-2; the sequence is MHWVRQAPGKGLVWVSR. The complementarity-determining-2 stretch occupies residues 70-77; sequence INSDGSST. Positions 78–115 are framework-3; the sequence is SYADSVKGRFTISRDNAKNTLYLQMNSLRAEDTAVYYC. Positions 116–117 are complementarity-determining-3; it reads AR.

As to quaternary structure, immunoglobulins are composed of two identical heavy chains and two identical light chains; disulfide-linked.

Its subcellular location is the secreted. It is found in the cell membrane. V region of the variable domain of immunoglobulin heavy chains that participates in the antigen recognition. Immunoglobulins, also known as antibodies, are membrane-bound or secreted glycoproteins produced by B lymphocytes. In the recognition phase of humoral immunity, the membrane-bound immunoglobulins serve as receptors which, upon binding of a specific antigen, trigger the clonal expansion and differentiation of B lymphocytes into immunoglobulins-secreting plasma cells. Secreted immunoglobulins mediate the effector phase of humoral immunity, which results in the elimination of bound antigens. The antigen binding site is formed by the variable domain of one heavy chain, together with that of its associated light chain. Thus, each immunoglobulin has two antigen binding sites with remarkable affinity for a particular antigen. The variable domains are assembled by a process called V-(D)-J rearrangement and can then be subjected to somatic hypermutations which, after exposure to antigen and selection, allow affinity maturation for a particular antigen. The protein is Immunoglobulin heavy variable 3-74 of Homo sapiens (Human).